The chain runs to 407 residues: Methylthioribose-1-phosphate isomerase (407 aa).

Catalysis depends on Asp-275, which acts as the Proton donor.

It belongs to the eIF-2B alpha/beta/delta subunits family. MtnA subfamily.

It localises to the cytoplasm. The protein resides in the nucleus. The enzyme catalyses 5-(methylsulfanyl)-alpha-D-ribose 1-phosphate = 5-(methylsulfanyl)-D-ribulose 1-phosphate. It participates in amino-acid biosynthesis; L-methionine biosynthesis via salvage pathway; L-methionine from S-methyl-5-thio-alpha-D-ribose 1-phosphate: step 1/6. In terms of biological role, catalyzes the interconversion of methylthioribose-1-phosphate (MTR-1-P) into methylthioribulose-1-phosphate (MTRu-1-P). This chain is Methylthioribose-1-phosphate isomerase, found in Kluyveromyces lactis (strain ATCC 8585 / CBS 2359 / DSM 70799 / NBRC 1267 / NRRL Y-1140 / WM37) (Yeast).